Consider the following 376-residue polypeptide: Erythronate-4-phosphate dehydrogenase (376 aa).

2 residues coordinate substrate: S45 and T67. D147 serves as a coordination point for NAD(+). The active site involves R209. Position 233 (D233) interacts with NAD(+). E238 is a catalytic residue. H255 (proton donor) is an active-site residue. Residue G258 coordinates NAD(+). Substrate is bound at residue Y259.

Belongs to the D-isomer specific 2-hydroxyacid dehydrogenase family. PdxB subfamily. As to quaternary structure, homodimer.

The protein localises to the cytoplasm. It carries out the reaction 4-phospho-D-erythronate + NAD(+) = (R)-3-hydroxy-2-oxo-4-phosphooxybutanoate + NADH + H(+). It functions in the pathway cofactor biosynthesis; pyridoxine 5'-phosphate biosynthesis; pyridoxine 5'-phosphate from D-erythrose 4-phosphate: step 2/5. In terms of biological role, catalyzes the oxidation of erythronate-4-phosphate to 3-hydroxy-2-oxo-4-phosphonooxybutanoate. This is Erythronate-4-phosphate dehydrogenase from Shewanella sp. (strain ANA-3).